We begin with the raw amino-acid sequence, 896 residues long: Translation initiation factor IF-2 (896 aa).

The segment at 1-260 (MDIENTNKPD…AQTNKKAHKA (260 aa)) is disordered. The span at 19–34 (KAADSKPESGKTDSKR) shows a compositional bias: basic and acidic residues. A compositionally biased stretch (low complexity) spans 56–66 (EESSGGKASGK). The span at 85–136 (SVKEKKPDERLEETKKTAPRFEDKKSDAPSAQNEKRSFDSAKKEEKQTERKK) shows a compositional bias: basic and acidic residues. The segment covering 168–177 (RGQGNRPQRP) has biased composition (low complexity). A tr-type G domain is found at 375–544 (PRPPVVTIMG…LLQAEVLELK (170 aa)). A G1 region spans residues 384–391 (GHVDHGKT). 384-391 (GHVDHGKT) lines the GTP pocket. Residues 409–413 (GITQH) are G2. The tract at residues 430–433 (DTPG) is G3. Residues 430 to 434 (DTPGH) and 484 to 487 (NKVD) contribute to the GTP site. Residues 484-487 (NKVD) form a G4 region. Residues 520–522 (SAL) form a G5 region. Residues 877–896 (SDSEKYKAPEIKEEGTETDE) form a disordered region.

It belongs to the TRAFAC class translation factor GTPase superfamily. Classic translation factor GTPase family. IF-2 subfamily.

The protein resides in the cytoplasm. Its function is as follows. One of the essential components for the initiation of protein synthesis. Protects formylmethionyl-tRNA from spontaneous hydrolysis and promotes its binding to the 30S ribosomal subunits. Also involved in the hydrolysis of GTP during the formation of the 70S ribosomal complex. This chain is Translation initiation factor IF-2, found in Treponema denticola (strain ATCC 35405 / DSM 14222 / CIP 103919 / JCM 8153 / KCTC 15104).